Consider the following 317-residue polypeptide: tRNA dimethylallyltransferase (317 aa).

14 to 21 (GPTASGKT) is a binding site for ATP. 16–21 (TASGKT) is a substrate binding site. 3 interaction with substrate tRNA regions span residues 39–42 (DSAL), 163–167 (QRIQR), and 248–253 (RCVGYR).

The protein belongs to the IPP transferase family. Monomer. The cofactor is Mg(2+).

It carries out the reaction adenosine(37) in tRNA + dimethylallyl diphosphate = N(6)-dimethylallyladenosine(37) in tRNA + diphosphate. Catalyzes the transfer of a dimethylallyl group onto the adenine at position 37 in tRNAs that read codons beginning with uridine, leading to the formation of N6-(dimethylallyl)adenosine (i(6)A). The chain is tRNA dimethylallyltransferase from Paraburkholderia phymatum (strain DSM 17167 / CIP 108236 / LMG 21445 / STM815) (Burkholderia phymatum).